Here is a 680-residue protein sequence, read N- to C-terminus: tRNA 5-methylaminomethyl-2-thiouridine biosynthesis bifunctional protein MnmC (680 aa).

Residues 1 to 245 (MSHPPIQTAT…KREMLTGILP (245 aa)) are tRNA (mnm(5)s(2)U34)-methyltransferase. The FAD-dependent cmnm(5)s(2)U34 oxidoreductase stretch occupies residues 270 to 680 (IGGGIVSALT…PVQQRVSVLS (411 aa)).

This sequence in the N-terminal section; belongs to the methyltransferase superfamily. tRNA (mnm(5)s(2)U34)-methyltransferase family. It in the C-terminal section; belongs to the DAO family. The cofactor is FAD.

It is found in the cytoplasm. The enzyme catalyses 5-aminomethyl-2-thiouridine(34) in tRNA + S-adenosyl-L-methionine = 5-methylaminomethyl-2-thiouridine(34) in tRNA + S-adenosyl-L-homocysteine + H(+). Catalyzes the last two steps in the biosynthesis of 5-methylaminomethyl-2-thiouridine (mnm(5)s(2)U) at the wobble position (U34) in tRNA. Catalyzes the FAD-dependent demodification of cmnm(5)s(2)U34 to nm(5)s(2)U34, followed by the transfer of a methyl group from S-adenosyl-L-methionine to nm(5)s(2)U34, to form mnm(5)s(2)U34. The chain is tRNA 5-methylaminomethyl-2-thiouridine biosynthesis bifunctional protein MnmC from Yersinia enterocolitica serotype O:8 / biotype 1B (strain NCTC 13174 / 8081).